Here is a 1034-residue protein sequence, read N- to C-terminus: MPRRKQQAPKRAAGYAQEEQLKEEEEIKEEEEEEDSGSVAQLQGGNDTGTDEELETGPEQKGCFSYQNSPGSHLSNQDAENESLLSDASDQVSDIKSVCGRDASDKKAHTHVRLPNEAHNCMDKMTAVYANILSDSYWSGLGLGFKLSNSERRNCDTRNGSNKSDFDWHQDALSKSLQQNLPSRSVSKPSLFSSVQLYRQSSKMCGTVFTGASRFRCRQCSAAYDTLVELTVHMNETGHYQDDNRKKDKLRPTSYSKPRKRAFQDMDKEDAQKVLKCMFCGDSFDSLQDLSVHMIKTKHYQKVPLKEPVPTISSKMVTPAKKRVFDVNRPCSPDSTTGSFADSFSSQKNANLQLSSNNRYGYQNGASYTWQFEACKSQILKCMECGSSHDTLQQLTTHMMVTGHFLKVTSSASKKGKQLVLDPLAVEKMQSLSEAPNSDSLAPKPSSNSASDCTASTTELKKESKKERPEETSKDEKVVKSEDYEDPLQKPLDPTIKYQYLREEDLEDGSKGGGDILKSLENTVTTAINKAQNGAPSWSAYPSIHAAYQLSEGTKPPLPMGSQVLQIRPNLTNKLRPIAPKWKVMPLVSMPTHLAPYTQVKKESEDKDEAVKECGKESPHEEASSFSHSEGDSFRKSETPPEAKKTELGPLKEEEKLMKEGSEKEKPQPLEPTSALSNGCALANHAPALPCINPLSALQSVLNNHLGKATEPLRSPSCSSPSSSTISMFHKSNLNVMDKPVLSPASTRSASVSRRYLFENSDQPIDLTKSKSKKAESSQAQSCMSPPQKHALSDIADMVKVLPKATTPKPASSSRVPPMKLEMDVRRFEDVSSEVSTLHKRKGRQSNWNPQHLLILQAQFASSLFQTSEGKYLLSDLGPQERMQISKFTGLSMTTISHWLANVKYQLRKTGGTKFLKNMDKGHPIFYCSDCASQFRTPSTYISHLESHLGFQMKDMTRLSVDQQSKVEQEISRVSSAQRSPETIAAEEDTDSKFKCKLCCRTFVSKHAVKLHLSKTHSKSPEHHSQFVTDVDEE.

A disordered region spans residues 1–90; it reads MPRRKQQAPK…NESLLSDASD (90 aa). Residues 13-38 adopt a coiled-coil conformation; the sequence is AGYAQEEQLKEEEEIKEEEEEEDSGS. The segment covering 21–36 has biased composition (acidic residues); sequence LKEEEEIKEEEEEEDS. Polar residues predominate over residues 65–90; sequence SYQNSPGSHLSNQDAENESLLSDASD. A Glycyl lysine isopeptide (Lys-Gly) (interchain with G-Cter in SUMO2) cross-link involves residue Lys188. C2H2-type zinc fingers lie at residues 215–239 and 275–299; these read FRCRQCSAAYDTLVELTVHMNETGH and LKCMFCGDSFDSLQDLSVHMIKTKH. The tract at residues 239–265 is disordered; it reads HYQDDNRKKDKLRPTSYSKPRKRAFQD. Glycyl lysine isopeptide (Lys-Gly) (interchain with G-Cter in SUMO2) cross-links involve residues Lys306 and Lys315. Residues 380–404 form a C2H2-type 3; atypical zinc finger; it reads LKCMECGSSHDTLQQLTTHMMVTGH. Lys417 participates in a covalent cross-link: Glycyl lysine isopeptide (Lys-Gly) (interchain with G-Cter in SUMO2). The segment covering 432–455 has biased composition (polar residues); sequence LSEAPNSDSLAPKPSSNSASDCTA. The segment at 432 to 496 is disordered; sequence LSEAPNSDSL…PLQKPLDPTI (65 aa). The span at 459–482 shows a compositional bias: basic and acidic residues; sequence ELKKESKKERPEETSKDEKVVKSE. Residues Lys461, Lys480, Lys497, Lys601, and Lys652 each participate in a glycyl lysine isopeptide (Lys-Gly) (interchain with G-Cter in SUMO2) cross-link. Disordered stretches follow at residues 598–676 and 763–789; these read TQVK…TSAL and QPIDLTKSKSKKAESSQAQSCMSPPQK. Positions 600–668 are enriched in basic and acidic residues; it reads VKKESEDKDE…KEGSEKEKPQ (69 aa). Residues Lys800 and Lys820 each participate in a glycyl lysine isopeptide (Lys-Gly) (interchain with G-Cter in SUMO2) cross-link. The segment at residues 841–911 is a DNA-binding region (homeobox; atypical); that stretch reads RKGRQSNWNP…NVKYQLRKTG (71 aa). A C2H2-type 4 zinc finger spans residues 926 to 948; the sequence is FYCSDCASQFRTPSTYISHLESH. Lys966 is covalently cross-linked (Glycyl lysine isopeptide (Lys-Gly) (interchain with G-Cter in SUMO2)). A Phosphoserine modification is found at Ser980. The C2H2-type 5 zinc-finger motif lies at 994-1017; that stretch reads FKCKLCCRTFVSKHAVKLHLSKTH. Positions 1014 to 1034 are disordered; it reads SKTHSKSPEHHSQFVTDVDEE.

The protein belongs to the teashirt C2H2-type zinc-finger protein family. As to quaternary structure, interacts (via homeobox domain) with APBB1 (via PID domain 1). Post-translationally, sumoylated. In terms of tissue distribution, expressed in brain; strongly reduced in post-mortem elderly subjects with Alzheimer disease.

Its subcellular location is the nucleus. Its function is as follows. Probable transcriptional regulator involved in developmental processes. May act as a transcriptional repressor (Potential). The sequence is that of Teashirt homolog 2 (TSHZ2) from Homo sapiens (Human).